We begin with the raw amino-acid sequence, 465 residues long: Cysteine--tRNA ligase (465 aa).

C30 lines the Zn(2+) pocket. The 'HIGH' region signature appears at 32–42; sequence MTVYDYCHVGH. 3 residues coordinate Zn(2+): C214, H239, and E243. The 'KMSKS' region signature appears at 271 to 275; sequence KMSKS. K274 contacts ATP.

It belongs to the class-I aminoacyl-tRNA synthetase family. As to quaternary structure, monomer. Zn(2+) serves as cofactor.

The protein localises to the cytoplasm. The enzyme catalyses tRNA(Cys) + L-cysteine + ATP = L-cysteinyl-tRNA(Cys) + AMP + diphosphate. The sequence is that of Cysteine--tRNA ligase from Paraburkholderia xenovorans (strain LB400).